A 55-amino-acid polypeptide reads, in one-letter code: ATP synthase F(0) complex subunit 8 (55 aa).

The helical transmembrane segment at 7–29 (NPWFYIMLMSWLTFSLIIQPELL) threads the bilayer.

Belongs to the ATPase protein 8 family. As to quaternary structure, component of the ATP synthase complex composed at least of ATP5F1A/subunit alpha, ATP5F1B/subunit beta, ATP5MC1/subunit c (homooctomer), MT-ATP6/subunit a, MT-ATP8/subunit 8, ATP5ME/subunit e, ATP5MF/subunit f, ATP5MG/subunit g, ATP5MK/subunit k, ATP5MJ/subunit j, ATP5F1C/subunit gamma, ATP5F1D/subunit delta, ATP5F1E/subunit epsilon, ATP5PF/subunit F6, ATP5PB/subunit b, ATP5PD/subunit d, ATP5PO/subunit OSCP. ATP synthase complex consists of a soluble F(1) head domain (subunits alpha(3) and beta(3)) - the catalytic core - and a membrane F(0) domain - the membrane proton channel (subunits c, a, 8, e, f, g, k and j). These two domains are linked by a central stalk (subunits gamma, delta, and epsilon) rotating inside the F1 region and a stationary peripheral stalk (subunits F6, b, d, and OSCP).

It is found in the mitochondrion membrane. Functionally, subunit 8, of the mitochondrial membrane ATP synthase complex (F(1)F(0) ATP synthase or Complex V) that produces ATP from ADP in the presence of a proton gradient across the membrane which is generated by electron transport complexes of the respiratory chain. ATP synthase complex consist of a soluble F(1) head domain - the catalytic core - and a membrane F(1) domain - the membrane proton channel. These two domains are linked by a central stalk rotating inside the F(1) region and a stationary peripheral stalk. During catalysis, ATP synthesis in the catalytic domain of F(1) is coupled via a rotary mechanism of the central stalk subunits to proton translocation. In vivo, can only synthesize ATP although its ATP hydrolase activity can be activated artificially in vitro. Part of the complex F(0) domain. The chain is ATP synthase F(0) complex subunit 8 from Musophaga violacea (Violet turaco).